Here is a 132-residue protein sequence, read N- to C-terminus: ATP synthase epsilon chain (132 aa).

It belongs to the ATPase epsilon chain family. F-type ATPases have 2 components, CF(1) - the catalytic core - and CF(0) - the membrane proton channel. CF(1) has five subunits: alpha(3), beta(3), gamma(1), delta(1), epsilon(1). CF(0) has three main subunits: a, b and c.

The protein resides in the cell inner membrane. Produces ATP from ADP in the presence of a proton gradient across the membrane. The sequence is that of ATP synthase epsilon chain from Anaeromyxobacter dehalogenans (strain 2CP-1 / ATCC BAA-258).